We begin with the raw amino-acid sequence, 338 residues long: MKVLVALSGGVDSSMSAKYLLEAGYSVVGCYMKLHSKPGYHEENIRKVKKVGEFLGIETHILDLEEEFNAKVYEPFVNAYKEGLTPNPCAHCNKNIKFGALWKFAQTLGCDKMATGHYARIEDGLIKVASDLSKDQSYFLANISPEILPYIIFPLGDKFKVDIKAAAAQIPQIAELASQKESSEICFVETTYIDILNKHFNTLMPGVVRDVSGKVVGKHDGYMRYTIGKRKGFSVDGAHSPHYVLKIDAAKNEIVVGLKDELSSFSFTTTNFNNFTDKNELECFVKIRYRSTPIPCLVSKLDDGATVKLKDNAGGVASGQLAVFYDEFDRVLASGFIR.

ATP is bound by residues 6 to 13 (ALSGGVDS) and M32. C92 serves as the catalytic Nucleophile. The cysteines at positions 92 and 186 are disulfide-linked. ATP is bound at residue G116. The interval 134–136 (KDQ) is interaction with tRNA. The active-site Cysteine persulfide intermediate is C186. Residues 288–289 (RY) form an interaction with tRNA region.

The protein belongs to the MnmA/TRMU family.

The protein localises to the cytoplasm. The catalysed reaction is S-sulfanyl-L-cysteinyl-[protein] + uridine(34) in tRNA + AH2 + ATP = 2-thiouridine(34) in tRNA + L-cysteinyl-[protein] + A + AMP + diphosphate + H(+). Its function is as follows. Catalyzes the 2-thiolation of uridine at the wobble position (U34) of tRNA, leading to the formation of s(2)U34. This chain is tRNA-specific 2-thiouridylase MnmA, found in Campylobacter fetus subsp. fetus (strain 82-40).